A 255-amino-acid chain; its full sequence is Thiazole synthase (255 aa).

Lysine 96 serves as the catalytic Schiff-base intermediate with DXP. 1-deoxy-D-xylulose 5-phosphate-binding positions include glycine 157, 183–184 (AG), and 205–206 (NS).

The protein belongs to the ThiG family. Homotetramer. Forms heterodimers with either ThiH or ThiS.

The protein localises to the cytoplasm. It carries out the reaction [ThiS sulfur-carrier protein]-C-terminal-Gly-aminoethanethioate + 2-iminoacetate + 1-deoxy-D-xylulose 5-phosphate = [ThiS sulfur-carrier protein]-C-terminal Gly-Gly + 2-[(2R,5Z)-2-carboxy-4-methylthiazol-5(2H)-ylidene]ethyl phosphate + 2 H2O + H(+). The protein operates within cofactor biosynthesis; thiamine diphosphate biosynthesis. Catalyzes the rearrangement of 1-deoxy-D-xylulose 5-phosphate (DXP) to produce the thiazole phosphate moiety of thiamine. Sulfur is provided by the thiocarboxylate moiety of the carrier protein ThiS. In vitro, sulfur can be provided by H(2)S. This is Thiazole synthase from Exiguobacterium sibiricum (strain DSM 17290 / CCUG 55495 / CIP 109462 / JCM 13490 / 255-15).